The chain runs to 168 residues: Transcription antitermination protein NusB (168 aa).

The protein belongs to the NusB family.

Functionally, involved in transcription antitermination. Required for transcription of ribosomal RNA (rRNA) genes. Binds specifically to the boxA antiterminator sequence of the ribosomal RNA (rrn) operons. This Chlamydia trachomatis serovar D (strain ATCC VR-885 / DSM 19411 / UW-3/Cx) protein is Transcription antitermination protein NusB.